The chain runs to 462 residues: UDP-N-acetylmuramate--L-alanine ligase (462 aa).

An ATP-binding site is contributed by 116-122 (GAHGKTT).

It belongs to the MurCDEF family.

Its subcellular location is the cytoplasm. It carries out the reaction UDP-N-acetyl-alpha-D-muramate + L-alanine + ATP = UDP-N-acetyl-alpha-D-muramoyl-L-alanine + ADP + phosphate + H(+). It functions in the pathway cell wall biogenesis; peptidoglycan biosynthesis. Functionally, cell wall formation. This Desulforamulus reducens (strain ATCC BAA-1160 / DSM 100696 / MI-1) (Desulfotomaculum reducens) protein is UDP-N-acetylmuramate--L-alanine ligase.